We begin with the raw amino-acid sequence, 296 residues long: tRNA dimethylallyltransferase (296 aa).

11–18 (GPTAVGKT) serves as a coordination point for ATP. 13–18 (TAVGKT) lines the substrate pocket. The tract at residues 36–39 (DSQQ) is interaction with substrate tRNA.

It belongs to the IPP transferase family. Monomer. Mg(2+) is required as a cofactor.

It catalyses the reaction adenosine(37) in tRNA + dimethylallyl diphosphate = N(6)-dimethylallyladenosine(37) in tRNA + diphosphate. Catalyzes the transfer of a dimethylallyl group onto the adenine at position 37 in tRNAs that read codons beginning with uridine, leading to the formation of N6-(dimethylallyl)adenosine (i(6)A). This chain is tRNA dimethylallyltransferase, found in Streptococcus equi subsp. equi (strain 4047).